Consider the following 272-residue polypeptide: Shikimate dehydrogenase (NADP(+)) (272 aa).

Shikimate contacts are provided by residues 14–16 (SKS) and threonine 61. The Proton acceptor role is filled by lysine 65. Glutamate 77 is an NADP(+) binding site. Residues asparagine 86 and aspartate 102 each coordinate shikimate. NADP(+) is bound by residues 126–130 (GAGGA), 149–154 (NRTVSR), and methionine 213. Tyrosine 215 serves as a coordination point for shikimate. Glycine 237 is a binding site for NADP(+).

This sequence belongs to the shikimate dehydrogenase family. Homodimer.

The enzyme catalyses shikimate + NADP(+) = 3-dehydroshikimate + NADPH + H(+). It participates in metabolic intermediate biosynthesis; chorismate biosynthesis; chorismate from D-erythrose 4-phosphate and phosphoenolpyruvate: step 4/7. Involved in the biosynthesis of the chorismate, which leads to the biosynthesis of aromatic amino acids. Catalyzes the reversible NADPH linked reduction of 3-dehydroshikimate (DHSA) to yield shikimate (SA). In Escherichia coli O45:K1 (strain S88 / ExPEC), this protein is Shikimate dehydrogenase (NADP(+)).